The chain runs to 308 residues: Ribosomal RNA small subunit methyltransferase H (308 aa).

Residues Gly-33–Tyr-35, Asp-51, Phe-82, Asp-96, and Gln-103 contribute to the S-adenosyl-L-methionine site.

The protein belongs to the methyltransferase superfamily. RsmH family.

Its subcellular location is the cytoplasm. The catalysed reaction is cytidine(1402) in 16S rRNA + S-adenosyl-L-methionine = N(4)-methylcytidine(1402) in 16S rRNA + S-adenosyl-L-homocysteine + H(+). Specifically methylates the N4 position of cytidine in position 1402 (C1402) of 16S rRNA. This Rickettsia canadensis (strain McKiel) protein is Ribosomal RNA small subunit methyltransferase H.